The following is a 455-amino-acid chain: Bifunctional protein GlmU (455 aa).

A pyrophosphorylase region spans residues 1–226 (MALNVVILAA…AIEVEGANNR (226 aa)). Residues 8–11 (LAAG), Lys22, Gln73, 78–79 (GT), 100–102 (YGD), Gly137, Glu151, Asn166, and Asn224 contribute to the UDP-N-acetyl-alpha-D-glucosamine site. Asp102 serves as a coordination point for Mg(2+). Asn224 is a binding site for Mg(2+). The linker stretch occupies residues 227–247 (VQLAQLERAYQARAAEKLMLE). The segment at 248-455 (GANLRDPARL…WARPVKKPKS (208 aa)) is N-acetyltransferase. UDP-N-acetyl-alpha-D-glucosamine contacts are provided by Arg330 and Lys348. His360 (proton acceptor) is an active-site residue. Positions 363 and 374 each coordinate UDP-N-acetyl-alpha-D-glucosamine. Residues Ala377, 383–384 (NY), Ser402, Ala420, and Arg437 each bind acetyl-CoA.

The protein in the N-terminal section; belongs to the N-acetylglucosamine-1-phosphate uridyltransferase family. In the C-terminal section; belongs to the transferase hexapeptide repeat family. In terms of assembly, homotrimer. Mg(2+) serves as cofactor.

The protein resides in the cytoplasm. It catalyses the reaction alpha-D-glucosamine 1-phosphate + acetyl-CoA = N-acetyl-alpha-D-glucosamine 1-phosphate + CoA + H(+). The catalysed reaction is N-acetyl-alpha-D-glucosamine 1-phosphate + UTP + H(+) = UDP-N-acetyl-alpha-D-glucosamine + diphosphate. It functions in the pathway nucleotide-sugar biosynthesis; UDP-N-acetyl-alpha-D-glucosamine biosynthesis; N-acetyl-alpha-D-glucosamine 1-phosphate from alpha-D-glucosamine 6-phosphate (route II): step 2/2. The protein operates within nucleotide-sugar biosynthesis; UDP-N-acetyl-alpha-D-glucosamine biosynthesis; UDP-N-acetyl-alpha-D-glucosamine from N-acetyl-alpha-D-glucosamine 1-phosphate: step 1/1. Its pathway is bacterial outer membrane biogenesis; LPS lipid A biosynthesis. Functionally, catalyzes the last two sequential reactions in the de novo biosynthetic pathway for UDP-N-acetylglucosamine (UDP-GlcNAc). The C-terminal domain catalyzes the transfer of acetyl group from acetyl coenzyme A to glucosamine-1-phosphate (GlcN-1-P) to produce N-acetylglucosamine-1-phosphate (GlcNAc-1-P), which is converted into UDP-GlcNAc by the transfer of uridine 5-monophosphate (from uridine 5-triphosphate), a reaction catalyzed by the N-terminal domain. The protein is Bifunctional protein GlmU of Shewanella sediminis (strain HAW-EB3).